The sequence spans 440 residues: 3-phosphoshikimate 1-carboxyvinyltransferase (440 aa).

3-phosphoshikimate contacts are provided by lysine 28, serine 29, and arginine 33. Lysine 28 is a phosphoenolpyruvate binding site. Phosphoenolpyruvate is bound by residues glycine 98 and arginine 126. 3-phosphoshikimate contacts are provided by serine 171, glutamine 173, aspartate 318, and lysine 345. Glutamine 173 contacts phosphoenolpyruvate. Aspartate 318 acts as the Proton acceptor in catalysis. 2 residues coordinate phosphoenolpyruvate: arginine 349 and arginine 391.

This sequence belongs to the EPSP synthase family. Monomer.

Its subcellular location is the cytoplasm. It carries out the reaction 3-phosphoshikimate + phosphoenolpyruvate = 5-O-(1-carboxyvinyl)-3-phosphoshikimate + phosphate. It participates in metabolic intermediate biosynthesis; chorismate biosynthesis; chorismate from D-erythrose 4-phosphate and phosphoenolpyruvate: step 6/7. Catalyzes the transfer of the enolpyruvyl moiety of phosphoenolpyruvate (PEP) to the 5-hydroxyl of shikimate-3-phosphate (S3P) to produce enolpyruvyl shikimate-3-phosphate and inorganic phosphate. This Anaeromyxobacter sp. (strain K) protein is 3-phosphoshikimate 1-carboxyvinyltransferase.